The following is a 79-amino-acid chain: uncharacterized protein (79 aa).

This is an uncharacterized protein from Saccharomyces cerevisiae (strain ATCC 204508 / S288c) (Baker's yeast).